The primary structure comprises 403 residues: Imidazolonepropionase (403 aa).

Positions 69 and 71 each coordinate Fe(3+). Residues His69 and His71 each contribute to the Zn(2+) site. Residues Arg78, Tyr141, and His174 each coordinate 4-imidazolone-5-propanoate. Residue Tyr141 coordinates N-formimidoyl-L-glutamate. His239 serves as a coordination point for Fe(3+). His239 is a binding site for Zn(2+). Gln242 contacts 4-imidazolone-5-propanoate. Asp314 provides a ligand contact to Fe(3+). Residue Asp314 participates in Zn(2+) binding. Positions 316 and 318 each coordinate N-formimidoyl-L-glutamate. Ser319 serves as a coordination point for 4-imidazolone-5-propanoate.

It belongs to the metallo-dependent hydrolases superfamily. HutI family. Zn(2+) serves as cofactor. Requires Fe(3+) as cofactor.

It localises to the cytoplasm. The catalysed reaction is 4-imidazolone-5-propanoate + H2O = N-formimidoyl-L-glutamate. It participates in amino-acid degradation; L-histidine degradation into L-glutamate; N-formimidoyl-L-glutamate from L-histidine: step 3/3. Its function is as follows. Catalyzes the hydrolytic cleavage of the carbon-nitrogen bond in imidazolone-5-propanoate to yield N-formimidoyl-L-glutamate. It is the third step in the universal histidine degradation pathway. The protein is Imidazolonepropionase of Legionella pneumophila (strain Lens).